A 210-amino-acid chain; its full sequence is Putative biopolymer transport protein ExbB-like 3 (210 aa).

3 helical membrane passes run 2 to 22 (AGGI…ALII), 104 to 124 (LFQT…ILGL), and 152 to 172 (LVST…ANVF).

Belongs to the ExbB/TolQ family.

The protein resides in the cell inner membrane. Functionally, involved in the TonB-dependent energy-dependent transport of various receptor-bound substrates. Protects ExbD from proteolytic degradation and functionally stabilizes TonB. The protein is Putative biopolymer transport protein ExbB-like 3 of Synechocystis sp. (strain ATCC 27184 / PCC 6803 / Kazusa).